The following is a 359-amino-acid chain: Mannonate dehydratase (359 aa).

This sequence belongs to the mannonate dehydratase family. Fe(2+) serves as cofactor. Requires Mn(2+) as cofactor.

It catalyses the reaction D-mannonate = 2-dehydro-3-deoxy-D-gluconate + H2O. It participates in carbohydrate metabolism; pentose and glucuronate interconversion. In terms of biological role, catalyzes the dehydration of D-mannonate. In Bacillus subtilis (strain 168), this protein is Mannonate dehydratase (uxuA).